A 535-amino-acid polypeptide reads, in one-letter code: Transmembrane protein 151 homolog (535 aa).

3 helical membrane-spanning segments follow: residues 27–47 (GYGKCLICSLLLVLCFFYATY), 73–93 (YNFVPIVFGLMLYIVYLMECW), and 254–274 (PWFLHPIVFWFFSILVLSWPL). The interval 498-535 (ASISHSSSKDLKSLTLKNNNGAANNNNNNNNENPEEQP) is disordered. The span at 510-529 (SLTLKNNNGAANNNNNNNNE) shows a compositional bias: low complexity.

Belongs to the TMEM151 family.

It is found in the membrane. The protein is Transmembrane protein 151 homolog of Caenorhabditis briggsae.